We begin with the raw amino-acid sequence, 286 residues long: Formamidopyrimidine-DNA glycosylase (286 aa).

Proline 2 acts as the Schiff-base intermediate with DNA in catalysis. The active-site Proton donor is glutamate 3. Residue lysine 61 is the Proton donor; for beta-elimination activity of the active site. Positions 96, 117, and 160 each coordinate DNA. The segment at 246–280 (DAYGREGLPCRRCATPMRRRPWMNRSSYFCPKCQR) adopts an FPG-type zinc-finger fold. Arginine 270 acts as the Proton donor; for delta-elimination activity in catalysis.

The protein belongs to the FPG family. As to quaternary structure, monomer. Zn(2+) serves as cofactor.

The enzyme catalyses Hydrolysis of DNA containing ring-opened 7-methylguanine residues, releasing 2,6-diamino-4-hydroxy-5-(N-methyl)formamidopyrimidine.. It carries out the reaction 2'-deoxyribonucleotide-(2'-deoxyribose 5'-phosphate)-2'-deoxyribonucleotide-DNA = a 3'-end 2'-deoxyribonucleotide-(2,3-dehydro-2,3-deoxyribose 5'-phosphate)-DNA + a 5'-end 5'-phospho-2'-deoxyribonucleoside-DNA + H(+). In terms of biological role, involved in base excision repair of DNA damaged by oxidation or by mutagenic agents. Acts as a DNA glycosylase that recognizes and removes damaged bases. Has a preference for oxidized purines, such as 7,8-dihydro-8-oxoguanine (8-oxoG). Has AP (apurinic/apyrimidinic) lyase activity and introduces nicks in the DNA strand. Cleaves the DNA backbone by beta-delta elimination to generate a single-strand break at the site of the removed base with both 3'- and 5'-phosphates. The polypeptide is Formamidopyrimidine-DNA glycosylase (Streptomyces avermitilis (strain ATCC 31267 / DSM 46492 / JCM 5070 / NBRC 14893 / NCIMB 12804 / NRRL 8165 / MA-4680)).